The sequence spans 220 residues: DNA mismatch repair protein MutH (220 aa).

The protein belongs to the MutH family.

The protein resides in the cytoplasm. Sequence-specific endonuclease that cleaves unmethylated GATC sequences. It is involved in DNA mismatch repair. The sequence is that of DNA mismatch repair protein MutH from Buchnera aphidicola subsp. Baizongia pistaciae (strain Bp).